Here is a 419-residue protein sequence, read N- to C-terminus: Phospho-N-acetylmuramoyl-pentapeptide-transferase (419 aa).

A run of 10 helical transmembrane segments spans residues 22 to 42 (YVSF…TVIG), 72 to 92 (TPTM…LLLA), 99 to 119 (ILLM…DDYI), 135 to 155 (IIGQ…NPAV), 208 to 228 (VLFG…FISN), 238 to 258 (GLAT…AYVS), 278 to 298 (LTIF…YNAY), 303 to 323 (FMGD…ALII), 328 to 348 (LLPI…IQVF), and 396 to 416 (KITV…IATL).

It belongs to the glycosyltransferase 4 family. MraY subfamily. Mg(2+) is required as a cofactor.

It is found in the cell inner membrane. The enzyme catalyses UDP-N-acetyl-alpha-D-muramoyl-L-alanyl-gamma-D-glutamyl-meso-2,6-diaminopimeloyl-D-alanyl-D-alanine + di-trans,octa-cis-undecaprenyl phosphate = di-trans,octa-cis-undecaprenyl diphospho-N-acetyl-alpha-D-muramoyl-L-alanyl-D-glutamyl-meso-2,6-diaminopimeloyl-D-alanyl-D-alanine + UMP. It functions in the pathway cell wall biogenesis; peptidoglycan biosynthesis. Its function is as follows. Catalyzes the initial step of the lipid cycle reactions in the biosynthesis of the cell wall peptidoglycan: transfers peptidoglycan precursor phospho-MurNAc-pentapeptide from UDP-MurNAc-pentapeptide onto the lipid carrier undecaprenyl phosphate, yielding undecaprenyl-pyrophosphoryl-MurNAc-pentapeptide, known as lipid I. The sequence is that of Phospho-N-acetylmuramoyl-pentapeptide-transferase from Porphyromonas gingivalis (strain ATCC 33277 / DSM 20709 / CIP 103683 / JCM 12257 / NCTC 11834 / 2561).